The sequence spans 308 residues: tRNA pseudouridine synthase B (308 aa).

Asp-49 functions as the Nucleophile in the catalytic mechanism.

The protein belongs to the pseudouridine synthase TruB family. Type 1 subfamily.

It carries out the reaction uridine(55) in tRNA = pseudouridine(55) in tRNA. Functionally, responsible for synthesis of pseudouridine from uracil-55 in the psi GC loop of transfer RNAs. This is tRNA pseudouridine synthase B from Nitrosococcus oceani (strain ATCC 19707 / BCRC 17464 / JCM 30415 / NCIMB 11848 / C-107).